A 416-amino-acid polypeptide reads, in one-letter code: Serine hydroxymethyltransferase (416 aa).

(6S)-5,6,7,8-tetrahydrofolate-binding positions include Leu121 and 125-127; that span reads GHL. Lys229 carries the post-translational modification N6-(pyridoxal phosphate)lysine.

Belongs to the SHMT family. As to quaternary structure, homodimer. Pyridoxal 5'-phosphate serves as cofactor.

The protein localises to the cytoplasm. It carries out the reaction (6R)-5,10-methylene-5,6,7,8-tetrahydrofolate + glycine + H2O = (6S)-5,6,7,8-tetrahydrofolate + L-serine. It functions in the pathway one-carbon metabolism; tetrahydrofolate interconversion. Its pathway is amino-acid biosynthesis; glycine biosynthesis; glycine from L-serine: step 1/1. Its function is as follows. Catalyzes the reversible interconversion of serine and glycine with tetrahydrofolate (THF) serving as the one-carbon carrier. This reaction serves as the major source of one-carbon groups required for the biosynthesis of purines, thymidylate, methionine, and other important biomolecules. Also exhibits THF-independent aldolase activity toward beta-hydroxyamino acids, producing glycine and aldehydes, via a retro-aldol mechanism. The protein is Serine hydroxymethyltransferase of Neisseria meningitidis serogroup A / serotype 4A (strain DSM 15465 / Z2491).